The sequence spans 773 residues: Probable C-mannosyltransferase DPY19L2 (773 aa).

A disordered region spans residues 1 to 45 (MVGPTRSKLREGSSDRPQSSCTGQARRRWSAATMEPQQERSAPQE). The Nuclear segment spans residues 1–122 (MVGPTRSKLR…ALQMHRFSHR (122 aa)). The helical transmembrane segment at 123–143 (TLFGLAIFVGILHWLHLITLF) threads the bilayer. Topologically, residues 144-209 (ENDHHFSHLS…INTVKRFHLY (66 aa)) are perinuclear space. The helical transmembrane segment at 210–230 (PEVVIAYWYRTIIGIMNLFGI) threads the bilayer. Over 231–256 (ETKTCWNVTRMEPLNEVQSCEGLGDP) the chain is Nuclear. Residues 257–277 (ACFYIGVIFILNGLMMGLFFI) traverse the membrane as a helical segment. Topologically, residues 278-311 (YSTYLSGSQLGGLITVACYFFNHGEATRVMWTPP) are perinuclear space. A helical transmembrane segment spans residues 312–332 (LRESFSYPFLVLQMYILTIIL). Residues 333–358 (RTSTVHKKHYMALCFSNVAFMLPWQF) lie on the Nuclear side of the membrane. Residues 359–379 (AQFILFTQIASLFPMYVVGYI) form a helical membrane-spanning segment. Topologically, residues 380–386 (EPSKFQK) are perinuclear space. The chain crosses the membrane as a helical span at residues 387 to 407 (IIYVNMSSVALCFILMFGNSM). The Nuclear portion of the chain corresponds to 408–437 (YLSSYYSSCLLVTWAIMQKKSKIQKLGGTE). The chain crosses the membrane as a helical span at residues 438–458 (LQFWLIQGCFWWCGTIILKFL). The Perinuclear space portion of the chain corresponds to 459 to 507 (TSKICGVSDHIRLSDLIAARILRYTDFDTLIYTCAPEFDFMEQATPLRY). The chain crosses the membrane as a helical span at residues 508–528 (IKTLLLPLILVITYLIFKKIV). At 529–548 (RDIMCVLYTNTYVRKQLLDN) the chain is on the nuclear side. The chain crosses the membrane as a helical span at residues 549–569 (AELIFHTLQLLAFTGLAILIM). The Perinuclear space segment spans residues 570–590 (RLKLFLTPHMCIMASLICSQR). A helical transmembrane segment spans residues 591–611 (LFGWLFCRIHFENVVFGILTM). Over 612–773 (MSIQGCANLH…NSMYRVLKIN (162 aa)) the chain is Nuclear.

Belongs to the dpy-19 family. Interacts with FAM209. Predominantly expressed in testis. Present in testis but absent from epididymal sperm (at protein level).

The protein localises to the nucleus inner membrane. Its function is as follows. Probable C-mannosyltransferase that mediates C-mannosylation of tryptophan residues on target proteins. Required during spermatogenesis for sperm head elongation and acrosome formation. Also plays a role in acrosome attachment to the nuclear envelope. In Mus musculus (Mouse), this protein is Probable C-mannosyltransferase DPY19L2 (Dpy19l2).